The following is a 314-amino-acid chain: Cytochrome f (314 aa).

Residues 1-30 form the signal peptide; that stretch reads MATNKFFKSLLFTLTIAISSFGFCVENSSA. Residues Tyr31, Cys51, Cys54, and His55 each contribute to the heme site. A helical transmembrane segment spans residues 280-300; the sequence is ILGYLAFCFCLLLTQVLLVLK.

The protein belongs to the cytochrome f family. As to quaternary structure, the 4 large subunits of the cytochrome b6-f complex are cytochrome b6, subunit IV (17 kDa polypeptide, petD), cytochrome f and the Rieske protein, while the 4 small subunits are PetG, PetL, PetM and PetN. The complex functions as a dimer. Heme is required as a cofactor.

The protein localises to the plastid. The protein resides in the chloroplast thylakoid membrane. In terms of biological role, component of the cytochrome b6-f complex, which mediates electron transfer between photosystem II (PSII) and photosystem I (PSI), cyclic electron flow around PSI, and state transitions. This Thalassiosira pseudonana (Marine diatom) protein is Cytochrome f.